We begin with the raw amino-acid sequence, 129 residues long: Ferredoxin-1 (129 aa).

The 2Fe-2S ferredoxin-type domain maps to 29 to 120 (SDMDLDDEDY…EVKIVYNAKH (92 aa)). Cys-64, Cys-69, Cys-72, and Cys-103 together coordinate [2Fe-2S] cluster.

Belongs to the 2Fe2S plant-type ferredoxin family. [2Fe-2S] cluster serves as cofactor.

In terms of biological role, ferredoxins are iron-sulfur proteins that transfer electrons in a wide variety of metabolic reactions. This Haloarcula marismortui (strain ATCC 43049 / DSM 3752 / JCM 8966 / VKM B-1809) (Halobacterium marismortui) protein is Ferredoxin-1 (fer1).